The chain runs to 509 residues: MTRLSLQLIAGLAGQAWLVNSDTPSHEAFASCLSDASVPIATKGTPEWTQHTTPFNTRLQYEPIAVAVPTEISQIAAAVTCAKKNSIPVTAKSGGHSFTSLGLGGEDGHLVIQLDRMYNVELAQNGTARIQSGARLGHVAVELYNQGKRALSHGYCPAVGVGGHAAHGGYGMVSRKYGLTLDWMKDATVVLHNGTIVYCSESEHSDLFWAIRGAGSSFGIVAEYGFETFPAPEKVTNFGIVLDWNPETAPAGLLAFQDFAQTMPSELSCQIDVRSTGYTLNGSYVGNEASLREALVPLLGKIGGHLEVHEGNWLEYVKFWAFGQPNIDITPPADNVHLSLYTTGALTPSLSANQFKSFADYIAKDAIKRGNSWSIQMFIHGGQNSAISGPKITDTAYAHRDKFLIFQFTDFVWPSQEYPEDGLALGREFRDIITNSFTNDQWGMYANVPDSQLSSGEAQKLYWGKNLERLETIKAKYDPSNLFRNPQSVKAAARCATHPLLLQGQCLLF.

The first 21 residues, 1 to 21 (MTRLSLQLIAGLAGQAWLVNS), serve as a signal peptide directing secretion. In terms of domain architecture, FAD-binding PCMH-type spans 59–231 (LQYEPIAVAV…AEYGFETFPA (173 aa)). N-linked (GlcNAc...) asparagine glycans are attached at residues Asn125, Asn193, and Asn281.

The protein belongs to the oxygen-dependent FAD-linked oxidoreductase family. FAD is required as a cofactor.

The protein operates within secondary metabolite biosynthesis; terpenoid biosynthesis. Functionally, FAD-linked oxidoreductase; part of the gene cluster that mediates the biosynthesis of the diterpenoid pyrones subglutinols A and B. The first step of the pathway is the synthesis of the alpha-pyrone moiety by the polyketide synthase dpmaA via condensation of one acetyl-CoA starter unit with 3 malonyl-CoA units and 2 methylations. The alpha-pyrone is then combined with geranylgeranyl pyrophosphate (GGPP) formed by the GGPP synthase dpmaD through the action of the prenyltransferase dpmaC to yield a linear alpha-pyrone diterpenoid. Subsequent steps in the diterpenoid pyrone biosynthetic pathway involve the decalin core formation, which is initiated by the epoxidation of the C10-C11 olefin by the FAD-dependent oxidoreductase dpmaE, and is followed by a cyclization cascade catalyzed by the terpene cyclase dpmaB. The dehydrogenase dpmaF is then involved in tetrahydrofuran (THF) ring formation at the C5 unit to complete the formation of subglutinols A and B. In Metarhizium anisopliae (Entomophthora anisopliae), this protein is FAD-linked oxidoreductase dpmaF.